The sequence spans 793 residues: Probable phosphoketolase (793 aa).

This sequence belongs to the XFP family. Thiamine diphosphate is required as a cofactor.

The protein is Probable phosphoketolase of Rhodopirellula baltica (strain DSM 10527 / NCIMB 13988 / SH1).